A 189-amino-acid polypeptide reads, in one-letter code: Selenoprotein S (189 aa).

The chain crosses the membrane as a helical span at residues 28 to 48 (SLLATYGWYIVFSCILLYVVF). The segment at 78-90 (RQEALAAARLKMQ) is VCP/p97-interacting motif (VIM). Residues 115-189 (KIEMWDSMQE…RRGPSSGGUG (75 aa)) are disordered. Ser140 carries the phosphoserine modification. Positions 159-173 (RGGGYNPLSGEGGGA) are enriched in gly residues. Sec188 is a non-standard amino acid (selenocysteine).

This sequence belongs to the selenoprotein S family. As to quaternary structure, interacts with DERL1 and (via VIM motif) with VCP, suggesting that it forms a membrane complex with DERL1 that serves as a receptor for VCP. Also interacts with DERL2, DERL3 and SELENOK. The SELENOK-SELENOS complex interacts with VCP. Interacts with CCDC47. Post-translationally, truncated SELENOS proteins produced by failed UGA/Sec decoding are ubiquitinated by the CRL2(KLHDC2) and CRL2(KLHDC3) complexes, which recognizes the glycine (Gly) at the C-terminus of truncated SELENOS proteins. Truncated SELENOS proteins produced by failed UGA/Sec decoding are also ubiquitinated by the CRL5(KLHDC1) complex.

The protein resides in the endoplasmic reticulum membrane. It localises to the cytoplasm. Its function is as follows. Involved in the degradation process of misfolded endoplasmic reticulum (ER) luminal proteins. Participates in the transfer of misfolded proteins from the ER to the cytosol, where they are destroyed by the proteasome in a ubiquitin-dependent manner. Probably acts by serving as a linker between DERL1, which mediates the retrotranslocation of misfolded proteins into the cytosol, and the ATPase complex VCP, which mediates the translocation and ubiquitination. The polypeptide is Selenoprotein S (Homo sapiens (Human)).